The following is a 378-amino-acid chain: Secreted LysM effector ldpA (378 aa).

A signal peptide spans 1-19 (MMKSIRFLASALALCLVDA). The span at 118–131 (WTPPTTTTRSTSSS) shows a compositional bias: low complexity. The interval 118–139 (WTPPTTTTRSTSSSAGNGVTTP) is disordered. Residues 152–198 (RFYLVVSGDSCYDIAAAQGISLDNFYTWNPAVGSSCGGLWPDYYVCV) form the LysM 1 domain. A disordered region spans residues 208-230 (TTTTTTTPTTTSTTTTTAGNGVT). 2 consecutive LysM domains span residues 245–291 (KFYQ…YVCV) and 330–376 (KFYL…YVCV).

The protein belongs to the secreted LysM effector family.

The protein localises to the secreted. It is found in the cell wall. The protein resides in the extracellular space. It localises to the extracellular matrix. Functionally, cell wall chitin of A.fumigatus recruits lung eosinophils during infection and ldpA might have a role in sequestration of chitin and act as triggers of host immunity to dampen host defense. The sequence is that of Secreted LysM effector ldpA from Aspergillus fumigatus (strain ATCC MYA-4609 / CBS 101355 / FGSC A1100 / Af293) (Neosartorya fumigata).